The following is a 292-amino-acid chain: Acetyl-coenzyme A carboxylase carboxyl transferase subunit beta (292 aa).

Residues 35–292 form the CoA carboxyltransferase N-terminal domain; that stretch reads VFSQCEQCNS…LKLHAKKVTS (258 aa). Zn(2+) is bound by residues cysteine 39, cysteine 42, cysteine 58, and cysteine 61. A C4-type zinc finger spans residues 39–61; it reads CEQCNSAIYNKDLEHNYEVCPYC.

This sequence belongs to the AccD/PCCB family. Acetyl-CoA carboxylase is a heterohexamer composed of biotin carboxyl carrier protein (AccB), biotin carboxylase (AccC) and two subunits each of ACCase subunit alpha (AccA) and ACCase subunit beta (AccD). Zn(2+) serves as cofactor.

It localises to the cytoplasm. The enzyme catalyses N(6)-carboxybiotinyl-L-lysyl-[protein] + acetyl-CoA = N(6)-biotinyl-L-lysyl-[protein] + malonyl-CoA. The protein operates within lipid metabolism; malonyl-CoA biosynthesis; malonyl-CoA from acetyl-CoA: step 1/1. Its function is as follows. Component of the acetyl coenzyme A carboxylase (ACC) complex. Biotin carboxylase (BC) catalyzes the carboxylation of biotin on its carrier protein (BCCP) and then the CO(2) group is transferred by the transcarboxylase to acetyl-CoA to form malonyl-CoA. This is Acetyl-coenzyme A carboxylase carboxyl transferase subunit beta from Acholeplasma laidlawii (strain PG-8A).